Reading from the N-terminus, the 118-residue chain is Vesicle-associated membrane protein 1 (118 aa).

Low complexity predominate over residues 1–15 (MSAPAQPPAEGTEGA). The tract at residues 1-38 (MSAPAQPPAEGTEGAAPGGGPPGPPPNTTSNRRLQQTQ) is disordered. The Cytoplasmic portion of the chain corresponds to 1 to 96 (MSAPAQPPAE…KRKYWWKNCK (96 aa)). Polar residues predominate over residues 28–38 (TTSNRRLQQTQ). The v-SNARE coiled-coil homology domain occupies 33-93 (RLQQTQAQVE…AKLKRKYWWK (61 aa)). S63 is subject to Phosphoserine. A helical; Anchor for type IV membrane protein membrane pass occupies residues 97 to 116 (MMIMLGAICAIIVVVIVIYI). Topologically, residues 117–118 (FT) are vesicular.

The protein belongs to the synaptobrevin family. In terms of assembly, interacts with VAPA and VAPB. In terms of processing, (Microbial infection) Targeted and hydrolyzed by C.botulinum neurotoxin type D (BoNT/D, botD) which hydrolyzes the 61-Lys-|-Leu-62 bond and inhibits neurotransmitter release. This is a poor substrate for BoNT/D, high concentrations are required to cleave it in vitro. (Microbial infection) Targeted and hydrolyzed by C.botulinum neurotoxin type F (BoNT/F, botF) which hydrolyzes the 60-Gln-|-Lys-61 bond and inhibits neurotransmitter release. Expressed in brain and spleen (at protein level). Isoform 1 expressed at very high level in brain. Even higher level found in spinal cord. Isoform 3 expressed in kidney, spleen and liver. Isoforms 2 and 3 expressed in osteoblasts of trabecular bone. Also expressed in heart.

The protein resides in the cytoplasmic vesicle. It is found in the secretory vesicle. The protein localises to the synaptic vesicle membrane. It localises to the synapse. Its subcellular location is the synaptosome. The protein resides in the cytoplasmic vesicle membrane. It is found in the mitochondrion outer membrane. Its function is as follows. Involved in the targeting and/or fusion of transport vesicles to their target membrane. This chain is Vesicle-associated membrane protein 1 (Vamp1), found in Rattus norvegicus (Rat).